The primary structure comprises 385 residues: Histidinol-phosphate aminotransferase (385 aa).

Lys-230 is subject to N6-(pyridoxal phosphate)lysine.

The protein belongs to the class-II pyridoxal-phosphate-dependent aminotransferase family. The cofactor is pyridoxal 5'-phosphate.

It carries out the reaction L-histidinol phosphate + 2-oxoglutarate = 3-(imidazol-4-yl)-2-oxopropyl phosphate + L-glutamate. The protein operates within amino-acid biosynthesis; L-histidine biosynthesis; L-histidine from 5-phospho-alpha-D-ribose 1-diphosphate: step 7/9. The chain is Histidinol-phosphate aminotransferase from Saccharomyces cerevisiae (strain ATCC 204508 / S288c) (Baker's yeast).